The sequence spans 468 residues: Two-component response regulator-like APRR9 (468 aa).

Positions 38–156 (RVLLVESDYS…ELKNLWQHVW (119 aa)) constitute a Response regulatory domain. Polar residues-rich tracts occupy residues 168 to 177 (HAQSLPASQH) and 194 to 203 (DQGSGAQAIN). Disordered regions lie at residues 168–203 (HAQSLPASQHNLEDTDETCEDSRYHSDQGSGAQAIN), 302–416 (VVAL…SRSQ), and 442–468 (RKKLAEQRPRVKGQFVRTVNSDASTKS). Residues 315 to 327 (TPTESHEKLRKVT) show a composition bias toward basic and acidic residues. Over residues 328-364 (SDQGSATTSSNQENIGSSSVSFRNQVLQSTVTNQKQD) the composition is skewed to polar residues. 2 stretches are compositionally biased toward basic and acidic residues: residues 371-382 (SNREKAASKEVE) and 400-409 (EKPKEEESAK). The CCT domain maps to 417–459 (REAALMKFRLKRKDRCFDKKVRYQSRKKLAEQRPRVKGQFVRT). Positions 458-468 (RTVNSDASTKS) are enriched in polar residues.

The protein belongs to the ARR-like family. Post-translationally, phosphorylated. Phosphorylation varies throughout the diurnal cycle.

Its subcellular location is the nucleus. Functionally, transcriptional repressor of CCA1 and LHY, and positive regulator of LWD1 and LWD2 expression. Controls photoperiodic flowering response and temperature compensation. Involved in the positive and negative feedback loops of the circadian clock. Expression of several members of the ARR-like family is controlled by circadian rhythm. Regulated at the transcriptional level by a corepressor complex consisting of ELF4, ELF3, and LUX. APRR9, APRR7, and APRR5 coordinately act on the upstream region of the target genes to repress their expression from noon until midnight. The particular coordinated sequential expression of APRR9, APRR7, APRR5, APRR3 and APPR1 result to circadian waves that may be at the basis of the endogenous circadian clock. The protein is Two-component response regulator-like APRR9 (APRR9) of Arabidopsis thaliana (Mouse-ear cress).